A 488-amino-acid polypeptide reads, in one-letter code: Ribosomal protein uS12 methylthiotransferase RimO (488 aa).

The region spanning 4–120 (RKVHFVSLGC…LGRVLAGDAE (117 aa)) is the MTTase N-terminal domain. Residues Cys13, Cys49, Cys83, Cys155, Cys159, and Cys162 each coordinate [4Fe-4S] cluster. The Radical SAM core domain maps to 141–377 (STPGGSAYVK…MTLQRRISHK (237 aa)). The TRAM domain maps to 380 to 448 (AAMIGRELEV…DYDLVGELLD (69 aa)).

Belongs to the methylthiotransferase family. RimO subfamily. It depends on [4Fe-4S] cluster as a cofactor.

Its subcellular location is the cytoplasm. The catalysed reaction is L-aspartate(89)-[ribosomal protein uS12]-hydrogen + (sulfur carrier)-SH + AH2 + 2 S-adenosyl-L-methionine = 3-methylsulfanyl-L-aspartate(89)-[ribosomal protein uS12]-hydrogen + (sulfur carrier)-H + 5'-deoxyadenosine + L-methionine + A + S-adenosyl-L-homocysteine + 2 H(+). Catalyzes the methylthiolation of an aspartic acid residue of ribosomal protein uS12. The sequence is that of Ribosomal protein uS12 methylthiotransferase RimO from Sorangium cellulosum (strain So ce56) (Polyangium cellulosum (strain So ce56)).